Here is a 350-residue protein sequence, read N- to C-terminus: DNA polymerase IV (350 aa).

The UmuC domain maps to 7-188 (IIHIDMDYFF…LPVKKLFGVG (182 aa)). Asp11 and Asp106 together coordinate Mg(2+). Glu107 is a catalytic residue.

Belongs to the DNA polymerase type-Y family. Monomer. The cofactor is Mg(2+).

The protein resides in the cytoplasm. It carries out the reaction DNA(n) + a 2'-deoxyribonucleoside 5'-triphosphate = DNA(n+1) + diphosphate. Its function is as follows. Poorly processive, error-prone DNA polymerase involved in untargeted mutagenesis. Copies undamaged DNA at stalled replication forks, which arise in vivo from mismatched or misaligned primer ends. These misaligned primers can be extended by PolIV. Exhibits no 3'-5' exonuclease (proofreading) activity. May be involved in translesional synthesis, in conjunction with the beta clamp from PolIII. The sequence is that of DNA polymerase IV from Francisella philomiragia subsp. philomiragia (strain ATCC 25017 / CCUG 19701 / FSC 153 / O#319-036).